A 173-amino-acid polypeptide reads, in one-letter code: Glucagon family neuropeptides (173 aa).

The signal sequence occupies residues 1–22 (MSSKATLALLIYGIIMHYSVYS). Residues 23-80 (SPLGLNYPNLRLENEVYDEDGNSLPALAFDSDQIAIRSPPSVADDLYTLYYPPEKGTE) constitute a propeptide that is removed on maturation. Lysine amide is present on K166. Residues 170 to 173 (LGYL) constitute a propeptide that is removed on maturation.

It belongs to the glucagon family.

It is found in the secreted. In terms of biological role, primary role of GHRH is to release GH from the pituitary. PACAP plays pivotal roles as a neurotransmitter and/or a neuromodulator. The chain is Glucagon family neuropeptides from Oncorhynchus nerka (Sockeye salmon).